Consider the following 125-residue polypeptide: Small ribosomal subunit protein uS13 (125 aa).

The disordered stretch occupies residues arginine 93–arginine 125.

It belongs to the universal ribosomal protein uS13 family. As to quaternary structure, part of the 30S ribosomal subunit. Forms a loose heterodimer with protein S19. Forms two bridges to the 50S subunit in the 70S ribosome.

Functionally, located at the top of the head of the 30S subunit, it contacts several helices of the 16S rRNA. In the 70S ribosome it contacts the 23S rRNA (bridge B1a) and protein L5 of the 50S subunit (bridge B1b), connecting the 2 subunits; these bridges are implicated in subunit movement. Contacts the tRNAs in the A and P-sites. In Arthrobacter sp. (strain FB24), this protein is Small ribosomal subunit protein uS13.